The following is a 360-amino-acid chain: Peptide chain release factor 1 (360 aa).

Q235 carries the N5-methylglutamine modification.

Belongs to the prokaryotic/mitochondrial release factor family. Post-translationally, methylated by PrmC. Methylation increases the termination efficiency of RF1.

The protein resides in the cytoplasm. Its function is as follows. Peptide chain release factor 1 directs the termination of translation in response to the peptide chain termination codons UAG and UAA. The sequence is that of Peptide chain release factor 1 from Paracidovorax citrulli (strain AAC00-1) (Acidovorax citrulli).